A 532-amino-acid polypeptide reads, in one-letter code: Small ribosomal subunit protein uS2cz (532 aa).

The segment at 1–271 (METLEKNFKK…SPISSKEKKA (271 aa)) is N-terminal extension. TRAM domains are found at residues 38-97 (ALQA…SILN), 127-186 (DFKV…KPIL), and 197-260 (NQMI…KILK).

The protein belongs to the universal ribosomal protein uS2 family.

It is found in the plastid. The protein localises to the chloroplast. The protein is Small ribosomal subunit protein uS2cz (rps2-1) of Tetradesmus obliquus (Green alga).